The following is a 208-amino-acid chain: UPF0637 protein BCAH820_3975 (208 aa).

Belongs to the UPF0637 family.

The sequence is that of UPF0637 protein BCAH820_3975 from Bacillus cereus (strain AH820).